Reading from the N-terminus, the 61-residue chain is uncharacterized protein (61 aa).

This is an uncharacterized protein from Escherichia coli (Bacteriophage T4).